A 563-amino-acid polypeptide reads, in one-letter code: Forkhead box protein O (563 aa).

Disordered stretches follow at residues 1–72 and 177–243; these read MDDF…DPQQ and KSVR…SYQL. Residue Thr-43 is modified to Phosphothreonine; by PKB/AKT1. A compositionally biased stretch (polar residues) spans 58 to 72; sequence TKASNQQLANGDPQQ. Residues 90–196 constitute a DNA-binding region (fork-head); that stretch reads WGNLSYADLI…ETSRYEKRRG (107 aa). Ser-185 carries the phosphoserine; by PKB/AKT1 modification. Over residues 216–225 the composition is skewed to polar residues; the sequence is ATPSPSSSVS. Ser-253 carries the phosphoserine; by PKB/AKT1 modification. Phosphoserine is present on residues Ser-256, Ser-257, and Ser-262. The interval 317 to 371 is disordered; sequence AASGLPTQPPPPYQPPQHPQHTQGYALNGPGLSPNSVTTTMSPAYPNSEPSSDSL. A compositionally biased stretch (pro residues) spans 323-334; sequence TQPPPPYQPPQH. Over residues 349-358 the composition is skewed to polar residues; the sequence is SPNSVTTTMS.

Interacts with melt.

The protein resides in the cytoplasm. It is found in the nucleus. Its function is as follows. Transcription factor involved in the regulation of the insulin signaling pathway. Consistently activates both the downstream target Thor\d4EBP and the feedback control target InR. Involved in negative regulation of the cell cycle, modulating cell growth and proliferation. In response to cellular stresses, such as nutrient deprivation or increased levels of reactive oxygen species, foxo is activated and inhibits growth through the action of target genes such as Thor. Foxo activated in the adult fat body can regulate lifespan in adults; an insulin peptide itself may function as one secondary messenger of insulin-regulated aging. Also regulates Lip4, homolog of human acid lipases, thereby acting as a key modulator of lipid metabolism by insulin signaling and integrates insulin responses to glucose and lipid homeostasis. This chain is Forkhead box protein O, found in Drosophila mojavensis (Fruit fly).